We begin with the raw amino-acid sequence, 363 residues long: Phosphoserine aminotransferase (363 aa).

Arg-41 contributes to the L-glutamate binding site. Pyridoxal 5'-phosphate contacts are provided by residues 75–76, Trp-100, Thr-155, Asp-175, and Gln-198; that span reads AS. N6-(pyridoxal phosphate)lysine is present on Lys-199. 239–240 lines the pyridoxal 5'-phosphate pocket; the sequence is NT.

It belongs to the class-V pyridoxal-phosphate-dependent aminotransferase family. SerC subfamily. Homodimer. Pyridoxal 5'-phosphate serves as cofactor.

Its subcellular location is the cytoplasm. The enzyme catalyses O-phospho-L-serine + 2-oxoglutarate = 3-phosphooxypyruvate + L-glutamate. The catalysed reaction is 4-(phosphooxy)-L-threonine + 2-oxoglutarate = (R)-3-hydroxy-2-oxo-4-phosphooxybutanoate + L-glutamate. Its pathway is amino-acid biosynthesis; L-serine biosynthesis; L-serine from 3-phospho-D-glycerate: step 2/3. In terms of biological role, catalyzes the reversible conversion of 3-phosphohydroxypyruvate to phosphoserine and of 3-hydroxy-2-oxo-4-phosphonooxybutanoate to phosphohydroxythreonine. The sequence is that of Phosphoserine aminotransferase from Streptococcus suis (strain 98HAH33).